A 1140-amino-acid chain; its full sequence is Calcium-activated potassium channel slo-1 (1140 aa).

At 1–44 the chain is on the extracellular side; the sequence is MGEIYSPSQSKGFNQPYGYPMNCNLSRVFMEMTEEDRKCLEERK. A helical transmembrane segment spans residues 45–65; sequence YWCFLLSSITTFCASMILVVI. Residues 66-139 are Cytoplasmic-facing; sequence WRVVTHLCCQ…LISGQSLTGR (74 aa). The chain crosses the membrane as a helical span at residues 140–161; that stretch reads FLVLLVFILSIGSLIIYFYDAS. Topologically, residues 162–178 are extracellular; the sequence is FQNFQVETCIPWQDSPS. The chain crosses the membrane as a helical span at residues 179 to 199; the sequence is QQIDLGFNIFFLVYFFIRFIA. At 200-203 the chain is on the cytoplasmic side; it reads ASDK. The helical transmembrane segment at 204–224 threads the bilayer; the sequence is VWFLLEMYSWIDFFTIPPSFV. Topologically, residues 225-228 are extracellular; the sequence is AIYL. The helical; Voltage-sensor transmembrane segment at 229–249 threads the bilayer; it reads QRNWLGFRFLRALRLMTVPDI. The Cytoplasmic segment spans residues 250–264; that stretch reads LQYLNILKTSSSIRL. Residues 265–285 form a helical membrane-spanning segment; that stretch reads TQLVTIFVAVCLTGAGLVHLL. Residues 286–299 lie on the Extracellular side of the membrane; it reads ENSGDFFKGFINPH. The pore-forming intramembrane region spans 300 to 322; it reads RITYADSVYFVLVTMSTVGYGDI. The short motif at 316-319 is the Selectivity for potassium element; sequence TVGY. Residues 323-331 lie on the Extracellular side of the membrane; sequence YCTTLCGRL. A helical transmembrane segment spans residues 332 to 352; sequence FMIFFILFGLAMFASYVPEIA. Residues 353–1140 are Cytoplasmic-facing; it reads DLIGNRQKYG…LEYEPGKRHF (788 aa). An RCK N-terminal 1 domain is found at 371–514; the sequence is KKHIVVCGHI…DWKRGDDVIC (144 aa). The segment S7 stretch occupies residues 520–540; the sequence is LGFIAQSCLAPGFSTMMANLF. The interval 578–598 is segment S8; it reads MTFPEAVDLLFNRLGLLLLAI. The segment S9 stretch occupies residues 797 to 817; that stretch reads VLNGHVVVCLFADQDSPLIGL. In terms of domain architecture, RCK N-terminal 2 spans 799–953; that stretch reads NGHVVVCLFA…GAKFGTNVPM (155 aa). A Calcium bowl motif is present at residues 955–977; it reads TELVNDSNVQFLDQDDDDDPDTE. The Ca(2+) site is built by Gln-964, Asp-967, Asp-970, and Asp-972. Positions 984–1004 are segment S10; the sequence is FACGTAFAISVLDSLMSTTYF.

This sequence belongs to the potassium channel family. Calcium-activated (TC 1.A.1.3) subfamily. Slo sub-subfamily. As to quaternary structure, homotetramer; which constitutes the calcium-activated potassium channel. In terms of processing, phosphorylated. In terms of tissue distribution, expressed in synaptic regions of the nervous system including in both the nerve ring and nerve cords, as well as in the body-wall and vulval muscle. Expressed broadly in motor neurons. Forms puncta at presynaptic terminals of neurons, muscle excitation sites, and in the dorsal nerve cord.

The protein resides in the cell membrane. The protein localises to the synapse. Its function is as follows. Potassium channel activated by both membrane depolarization or increase in cytosolic Ca(2+) that mediates export of K(+). Its activation dampens the excitatory events that elevate the cytosolic Ca(2+) concentration and/or depolarize the cell membrane. It therefore contributes to repolarization of the membrane potential. Essential for the regulation of neurotransmitter release at synapses. Regulates longevity and age-associated decline in motor activity in mid-late life, by acting in motor neurons and through daf-16 in the intestine. When clustered in neurons, mediates ethanol-induced suppression of locomotory and egg-laying behaviors. The protein is Calcium-activated potassium channel slo-1 of Caenorhabditis elegans.